The sequence spans 321 residues: Carnitine monooxygenase reductase subunit (321 aa).

The 106-residue stretch at 4-109 (YQMFEVQVSQ…STPNNLFALI (106 aa)) folds into the FAD-binding FR-type domain. Residues 233–321 (DAFTLVLARS…AKGKRLVLDL (89 aa)) form the 2Fe-2S ferredoxin-type domain. [2Fe-2S] cluster contacts are provided by Cys-270, Cys-275, Cys-278, and Cys-308.

This sequence belongs to the PDR/VanB family. CntB subfamily. Composed of an oxygenase subunit (yeaW) and a reductase subunit (yeaX). FMN serves as cofactor. Requires [2Fe-2S] cluster as cofactor.

The enzyme catalyses (R)-carnitine + NADH + O2 + H(+) = (3R)-3-hydroxy-4-oxobutanoate + trimethylamine + NAD(+) + H2O. The catalysed reaction is (R)-carnitine + NADPH + O2 + H(+) = (3R)-3-hydroxy-4-oxobutanoate + trimethylamine + NADP(+) + H2O. The protein operates within amine and polyamine metabolism; carnitine metabolism. In terms of biological role, converts carnitine to trimethylamine and malic semialdehyde. Can also use gamma-butyrobetaine, choline and betaine as substrates. This chain is Carnitine monooxygenase reductase subunit (yeaX), found in Escherichia coli (strain K12).